The sequence spans 202 residues: uncharacterized protein (202 aa).

Its subcellular location is the mitochondrion. This is an uncharacterized protein from Schizosaccharomyces pombe (strain 972 / ATCC 24843) (Fission yeast).